A 126-amino-acid chain; its full sequence is MNSLFPVMVGGAVGAGARHLVGQAMLARFGPGFPWWTLSVNIVGSLAMGLLIGLLARSGTGGETTRLFVGVGMLGGFTTFSSFSMEFWLLFERGQSVQAGLYVVASVVGALLACGAGMILIRQLPA.

The next 3 helical transmembrane spans lie at 35–55, 71–91, and 101–121; these read WWTL…IGLL, VGML…WLLF, and LYVV…MILI. Na(+)-binding residues include glycine 75 and threonine 78.

This sequence belongs to the fluoride channel Fluc/FEX (TC 1.A.43) family.

The protein localises to the cell inner membrane. It catalyses the reaction fluoride(in) = fluoride(out). Na(+) is not transported, but it plays an essential structural role and its presence is essential for fluoride channel function. Its function is as follows. Fluoride-specific ion channel. Important for reducing fluoride concentration in the cell, thus reducing its toxicity. The polypeptide is Fluoride-specific ion channel FluC (Sphingopyxis alaskensis (strain DSM 13593 / LMG 18877 / RB2256) (Sphingomonas alaskensis)).